The sequence spans 334 residues: Glyceraldehyde-3-phosphate dehydrogenase 1 (334 aa).

Residues 11 to 12 (RI), aspartate 33, arginine 77, and serine 119 contribute to the NAD(+) site. Residues 150-152 (SCT) and threonine 181 contribute to the D-glyceraldehyde 3-phosphate site. Residue cysteine 151 is the Nucleophile of the active site. Asparagine 182 contributes to the NAD(+) binding site. D-glyceraldehyde 3-phosphate contacts are provided by residues arginine 196, 209–210 (TG), and arginine 232. An NAD(+)-binding site is contributed by asparagine 314.

Belongs to the glyceraldehyde-3-phosphate dehydrogenase family. As to quaternary structure, homotetramer.

It is found in the cytoplasm. It carries out the reaction D-glyceraldehyde 3-phosphate + phosphate + NAD(+) = (2R)-3-phospho-glyceroyl phosphate + NADH + H(+). The protein operates within carbohydrate degradation; glycolysis; pyruvate from D-glyceraldehyde 3-phosphate: step 1/5. Functionally, catalyzes the oxidative phosphorylation of glyceraldehyde 3-phosphate (G3P) to 1,3-bisphosphoglycerate (BPG) using the cofactor NAD. The first reaction step involves the formation of a hemiacetal intermediate between G3P and a cysteine residue, and this hemiacetal intermediate is then oxidized to a thioester, with concomitant reduction of NAD to NADH. The reduced NADH is then exchanged with the second NAD, and the thioester is attacked by a nucleophilic inorganic phosphate to produce BPG. This is Glyceraldehyde-3-phosphate dehydrogenase 1 (gap1) from Bacillus cereus.